The chain runs to 95 residues: UPF0358 protein BCG9842_B1188 (95 aa).

Belongs to the UPF0358 family.

This is UPF0358 protein BCG9842_B1188 from Bacillus cereus (strain G9842).